Here is a 420-residue protein sequence, read N- to C-terminus: D-tagatose-1,6-bisphosphate aldolase subunit GatZ (420 aa).

The protein belongs to the GatZ/KbaZ family. GatZ subfamily. In terms of assembly, forms a complex with GatY.

Its pathway is carbohydrate metabolism; D-tagatose 6-phosphate degradation; D-glyceraldehyde 3-phosphate and glycerone phosphate from D-tagatose 6-phosphate: step 2/2. Component of the tagatose-1,6-bisphosphate aldolase GatYZ that is required for full activity and stability of the Y subunit. Could have a chaperone-like function for the proper and stable folding of GatY. When expressed alone, GatZ does not show any aldolase activity. Is involved in the catabolism of galactitol. The sequence is that of D-tagatose-1,6-bisphosphate aldolase subunit GatZ from Escherichia coli O17:K52:H18 (strain UMN026 / ExPEC).